Consider the following 98-residue polypeptide: NADH-ubiquinone oxidoreductase chain 4L (98 aa).

The next 3 membrane-spanning stretches (helical) occupy residues 1-21, 29-49, and 61-81; these read MSLV…GLLM, SLLC…LMIL, and IILL…LVMV.

The protein belongs to the complex I subunit 4L family. In terms of assembly, core subunit of respiratory chain NADH dehydrogenase (Complex I) which is composed of 45 different subunits.

It is found in the mitochondrion inner membrane. It carries out the reaction a ubiquinone + NADH + 5 H(+)(in) = a ubiquinol + NAD(+) + 4 H(+)(out). Functionally, core subunit of the mitochondrial membrane respiratory chain NADH dehydrogenase (Complex I) which catalyzes electron transfer from NADH through the respiratory chain, using ubiquinone as an electron acceptor. Part of the enzyme membrane arm which is embedded in the lipid bilayer and involved in proton translocation. This chain is NADH-ubiquinone oxidoreductase chain 4L (MT-ND4L), found in Pantholops hodgsonii (Chiru).